The following is a 103-amino-acid chain: Large ribosomal subunit protein bL21 (103 aa).

It belongs to the bacterial ribosomal protein bL21 family. In terms of assembly, part of the 50S ribosomal subunit. Contacts protein L20.

Functionally, this protein binds to 23S rRNA in the presence of protein L20. The sequence is that of Large ribosomal subunit protein bL21 from Wolinella succinogenes (strain ATCC 29543 / DSM 1740 / CCUG 13145 / JCM 31913 / LMG 7466 / NCTC 11488 / FDC 602W) (Vibrio succinogenes).